We begin with the raw amino-acid sequence, 717 residues long: Patatin-like phospholipase domain-containing protein AO090003000839 (717 aa).

The helical transmembrane segment at 87–107 threads the bilayer; sequence WPFLFIVFGWITVLGFAYALT. A PNPLA domain is found at 277–468; the sequence is LCLSGGATFA…RTDIPIRALN (192 aa). The GXSXG signature appears at 308-312; sequence GTSGG. Catalysis depends on serine 310, which acts as the Nucleophile. Aspartate 455 (proton acceptor) is an active-site residue. The tract at residues 620–696 is disordered; it reads VSPAQSRRKR…STGNIFQEMR (77 aa). The span at 639–658 shows a compositional bias: basic and acidic residues; sequence MVERLDHNLPDRQPDNKEDL. The span at 660 to 673 shows a compositional bias: low complexity; the sequence is DSSGIDSNVSSRDS.

Belongs to the PLPL family.

The protein localises to the membrane. In terms of biological role, probable lipid hydrolase. This is Patatin-like phospholipase domain-containing protein AO090003000839 from Aspergillus oryzae (strain ATCC 42149 / RIB 40) (Yellow koji mold).